Reading from the N-terminus, the 304-residue chain is WW domain-binding protein 1 (304 aa).

The tract at residues Met1–Pro26 is disordered. 2 consecutive short sequence motifs (PPxY motif) follow at residues Pro159–Tyr162 and Pro172–Tyr176. Disordered stretches follow at residues Thr206–Pro235 and Cys252–Pro304. Over residues Glu209–Leu218 the composition is skewed to polar residues.

As to quaternary structure, binds to the WW domain of YAP1, WWP1 and WWP2. Interacts with WWOX. Interacts with NEDD4.

This Mus musculus (Mouse) protein is WW domain-binding protein 1 (Wbp1).